The following is a 204-amino-acid chain: MNAYRLYLVTDDQQDLATLKRVVRKAVEGGVTMVQVREKHGDVRAFIERAQAVKDILKDTDVPLIINDRVDVALAVDADGVHLGQSDMPATIARELIGPNKILGLSIENEEQLTEADSLPIDYIGLSAIFATPTKTNTKKHWGIDGLKMALETTSLPIVAIGGINESNIPQLSATGVHGLALVSAICHAEDPKAASEYLLGLMR.

Residues 35 to 39 (QVREK) and Asn-67 contribute to the 4-amino-2-methyl-5-(diphosphooxymethyl)pyrimidine site. Mg(2+) contacts are provided by Asp-68 and Asp-87. Residue Ser-106 coordinates 4-amino-2-methyl-5-(diphosphooxymethyl)pyrimidine. A 2-[(2R,5Z)-2-carboxy-4-methylthiazol-5(2H)-ylidene]ethyl phosphate-binding site is contributed by 132 to 134 (TPT). 4-amino-2-methyl-5-(diphosphooxymethyl)pyrimidine is bound at residue Lys-135. Residues Gly-163 and 183–184 (VS) contribute to the 2-[(2R,5Z)-2-carboxy-4-methylthiazol-5(2H)-ylidene]ethyl phosphate site.

It belongs to the thiamine-phosphate synthase family. Requires Mg(2+) as cofactor.

It carries out the reaction 2-[(2R,5Z)-2-carboxy-4-methylthiazol-5(2H)-ylidene]ethyl phosphate + 4-amino-2-methyl-5-(diphosphooxymethyl)pyrimidine + 2 H(+) = thiamine phosphate + CO2 + diphosphate. The enzyme catalyses 2-(2-carboxy-4-methylthiazol-5-yl)ethyl phosphate + 4-amino-2-methyl-5-(diphosphooxymethyl)pyrimidine + 2 H(+) = thiamine phosphate + CO2 + diphosphate. The catalysed reaction is 4-methyl-5-(2-phosphooxyethyl)-thiazole + 4-amino-2-methyl-5-(diphosphooxymethyl)pyrimidine + H(+) = thiamine phosphate + diphosphate. The protein operates within cofactor biosynthesis; thiamine diphosphate biosynthesis; thiamine phosphate from 4-amino-2-methyl-5-diphosphomethylpyrimidine and 4-methyl-5-(2-phosphoethyl)-thiazole: step 1/1. Condenses 4-methyl-5-(beta-hydroxyethyl)thiazole monophosphate (THZ-P) and 2-methyl-4-amino-5-hydroxymethyl pyrimidine pyrophosphate (HMP-PP) to form thiamine monophosphate (TMP). This chain is Thiamine-phosphate synthase, found in Vibrio campbellii (strain ATCC BAA-1116).